Reading from the N-terminus, the 118-residue chain is uncharacterized protein (118 aa).

Positions 1–27 (MPIKEPDVWALIWSWLQTNLSSSSAQS) are cleaved as a signal peptide.

This is an uncharacterized protein from Haemophilus influenzae (strain ATCC 51907 / DSM 11121 / KW20 / Rd).